A 149-amino-acid polypeptide reads, in one-letter code: Deoxyuridine 5'-triphosphate nucleotidohydrolase (149 aa).

Substrate-binding positions include Arg68–Gly70, Asn81, Leu85–Asp87, and Met95.

It belongs to the dUTPase family. Mg(2+) serves as cofactor.

The enzyme catalyses dUTP + H2O = dUMP + diphosphate + H(+). The protein operates within pyrimidine metabolism; dUMP biosynthesis; dUMP from dCTP (dUTP route): step 2/2. Its function is as follows. This enzyme is involved in nucleotide metabolism: it produces dUMP, the immediate precursor of thymidine nucleotides and it decreases the intracellular concentration of dUTP so that uracil cannot be incorporated into DNA. In Bordetella bronchiseptica (strain ATCC BAA-588 / NCTC 13252 / RB50) (Alcaligenes bronchisepticus), this protein is Deoxyuridine 5'-triphosphate nucleotidohydrolase.